A 217-amino-acid chain; its full sequence is MARKGILGTKLGMTQVFDENNKVVPVTVVKAGPNVVTRIRTPERDGYSAVQLAYGEISPRKVNKPVTGQYTAAGVNPRRHLAELRLDDAEAVTEYEVGQELTAEIFADGSYVDVTGTSKGKGFAGTMKRHGFSGQGASHGAQAVHRRPGSIGGCATPARVFKGTRMAGRMGNDRVTVQNLLVHKVDAEQSVLLIKGAVPGRTGGLVTVRSAIKRGEK.

This sequence belongs to the universal ribosomal protein uL3 family. In terms of assembly, part of the 50S ribosomal subunit. Forms a cluster with proteins L14 and L19.

Functionally, one of the primary rRNA binding proteins, it binds directly near the 3'-end of the 23S rRNA, where it nucleates assembly of the 50S subunit. The sequence is that of Large ribosomal subunit protein uL3 from Mycobacterium ulcerans (strain Agy99).